Consider the following 267-residue polypeptide: MKAAVLTLAVLFLTGSQARHFWQQDEPPQTPWDRVKDLATVYVDVLKDSGRDYVSQFEGSALGKQLNLKLLDNWDSMTSTFSKLREQLGPVTQEFWDNLEKETEGLRQEMSKDLEEVKAKVQPYLDDFQKKWQEEMELYRQKVEPLRAELQEGARQKLHELHEKLSPLGEEMRDRARAHVDALRTHLAPYTDELRQRLAARLEALKENGGARLAEYHAKASEHLSTLSEKAKPALEDLRQGLLPVLESFKVSFLSALEEYTKKLNTQ.

A signal peptide spans 1-18 (MKAAVLTLAVLFLTGSQA). 2 repeat units span residues 68–89 (LKLLDNWDSMTSTFSKLREQLG) and 90–111 (PVTQEFWDNLEKETEGLRQEMS). The tract at residues 68 to 267 (LKLLDNWDSM…EEYTKKLNTQ (200 aa)) is 10 X approximate tandem repeats. Met-110 carries the post-translational modification Methionine sulfoxide. Residues 112–122 (KDLEEVKAKVQ) form a 3; half-length repeat. 5 consecutive repeat copies span residues 123–144 (PYLDDFQKKWQEEMELYRQKVE), 145–166 (PLRAELQEGARQKLHELHEKLS), 167–188 (PLGEEMRDRARAHVDALRTHLA), 189–210 (PYTDELRQRLAARLEALKENGG), and 211–232 (ARLAEYHAKASEHLSTLSEKAK). Met-136 carries the methionine sulfoxide modification. The stretch at 233-243 (PALEDLRQGLL) is one 9; half-length repeat. The stretch at 244-267 (PVLESFKVSFLSALEEYTKKLNTQ) is repeat 10.

It belongs to the apolipoprotein A1/A4/E family. As to quaternary structure, homodimer. Interacts with APOA1BP and CLU. Component of a sperm activating protein complex (SPAP), consisting of APOA1, an immunoglobulin heavy chain, an immunoglobulin light chain and albumin. Interacts with NDRG1. Interacts with SCGB3A2. Interacts with NAXE and YJEFN3. In terms of processing, glycosylated. Palmitoylated. Major protein of plasma HDL, also found in chylomicrons.

The protein localises to the secreted. Functionally, participates in the reverse transport of cholesterol from tissues to the liver for excretion by promoting cholesterol efflux from tissues and by acting as a cofactor for the lecithin cholesterol acyltransferase (LCAT). As part of the SPAP complex, activates spermatozoa motility. This Pongo abelii (Sumatran orangutan) protein is Apolipoprotein A-I (APOA1).